We begin with the raw amino-acid sequence, 393 residues long: NAD(P)H-quinone oxidoreductase subunit H, chloroplastic (393 aa).

The protein belongs to the complex I 49 kDa subunit family. NDH is composed of at least 16 different subunits, 5 of which are encoded in the nucleus.

The protein resides in the plastid. It is found in the chloroplast thylakoid membrane. The catalysed reaction is a plastoquinone + NADH + (n+1) H(+)(in) = a plastoquinol + NAD(+) + n H(+)(out). It carries out the reaction a plastoquinone + NADPH + (n+1) H(+)(in) = a plastoquinol + NADP(+) + n H(+)(out). NDH shuttles electrons from NAD(P)H:plastoquinone, via FMN and iron-sulfur (Fe-S) centers, to quinones in the photosynthetic chain and possibly in a chloroplast respiratory chain. The immediate electron acceptor for the enzyme in this species is believed to be plastoquinone. Couples the redox reaction to proton translocation, and thus conserves the redox energy in a proton gradient. The protein is NAD(P)H-quinone oxidoreductase subunit H, chloroplastic of Pelargonium hortorum (Common geranium).